A 266-amino-acid chain; its full sequence is Trypsin 5G1 (266 aa).

The N-terminal stretch at 1–18 (MTRIILILTATFFACALG) is a signal peptide. A propeptide spans 19–39 (ASTGGSHPLRPWWNALRSSGR) (activation peptide). Positions 40–265 (IVGGFEVPVE…VRDWVKEVSG (226 aa)) constitute a Peptidase S1 domain. An intrachain disulfide couples Cys66 to Cys82. Active-site charge relay system residues include His81 and Asp125. Intrachain disulfides connect Cys190/Cys206 and Cys217/Cys241. The active-site Charge relay system is the Ser221.

Belongs to the peptidase S1 family. Midgut.

It localises to the secreted. The protein resides in the extracellular space. The enzyme catalyses Preferential cleavage: Arg-|-Xaa, Lys-|-Xaa.. Its function is as follows. Major function may be to aid in digestion of the blood meal. This chain is Trypsin 5G1, found in Aedes aegypti (Yellowfever mosquito).